We begin with the raw amino-acid sequence, 319 residues long: Sulfate adenylyltransferase subunit 2 (319 aa).

Disordered stretches follow at residues 1 to 22 (MNPGRGGAYAAGRDGTRGTRRP) and 296 to 319 (RGATRADDKLSEAAMEDRKREGYF).

This sequence belongs to the PAPS reductase family. CysD subfamily.

The catalysed reaction is sulfate + ATP + H(+) = adenosine 5'-phosphosulfate + diphosphate. The protein operates within antibiotic biosynthesis; mitomycin C biosynthesis. Its function is as follows. With CysN forms the ATP sulfurylase (ATPS) that catalyzes the adenylation of sulfate producing adenosine 5'-phosphosulfate (APS) and diphosphate, the first enzymatic step in sulfur assimilation pathway. APS synthesis involves the formation of a high-energy phosphoric-sulfuric acid anhydride bond driven by GTP hydrolysis by CysN coupled to ATP hydrolysis by CysD. The polypeptide is Sulfate adenylyltransferase subunit 2 (mmcV) (Streptomyces lavendulae).